The primary structure comprises 305 residues: tRNA uridine(34) hydroxylase (305 aa).

Positions 136–230 constitute a Rhodanese domain; it reads ADENTVVVDK…YLEEVPREQS (95 aa). Residue Cys190 is the Cysteine persulfide intermediate of the active site.

Belongs to the TrhO family.

The catalysed reaction is uridine(34) in tRNA + AH2 + O2 = 5-hydroxyuridine(34) in tRNA + A + H2O. Functionally, catalyzes oxygen-dependent 5-hydroxyuridine (ho5U) modification at position 34 in tRNAs. The sequence is that of tRNA uridine(34) hydroxylase from Brucella melitensis biotype 1 (strain ATCC 23456 / CCUG 17765 / NCTC 10094 / 16M).